Here is a 559-residue protein sequence, read N- to C-terminus: Suppressor of tumorigenicity 7 protein-like (559 aa).

Transmembrane regions (helical) follow at residues glycine 39–leucine 59, phenylalanine 83–tryptophan 103, and leucine 513–leucine 533.

The protein belongs to the ST7 family.

Its subcellular location is the membrane. The polypeptide is Suppressor of tumorigenicity 7 protein-like (St7l) (Rattus norvegicus (Rat)).